Reading from the N-terminus, the 1381-residue chain is Hepatocyte growth factor receptor (1381 aa).

A signal peptide spans Met1 to Gly24. Over Glu25–Thr932 the chain is Extracellular. The Sema domain maps to Lys27–Leu515. Asn45 carries N-linked (GlcNAc...) asparagine glycosylation. Cystine bridges form between Cys95-Cys101, Cys98-Cys160, Cys133-Cys141, and Cys172-Cys175. N-linked (GlcNAc...) asparagine glycosylation is present at Asn106. An N-linked (GlcNAc...) asparagine glycan is attached at Asn149. Asn202 carries N-linked (GlcNAc...) asparagine glycosylation. 2 cysteine pairs are disulfide-bonded: Cys298-Cys363 and Cys385-Cys397. Asn399 and Asn405 each carry an N-linked (GlcNAc...) asparagine glycan. 4 disulfide bridges follow: Cys520–Cys538, Cys526–Cys561, Cys529–Cys545, and Cys541–Cys551. 3 consecutive IPT/TIG domains span residues Pro563–Val655, Pro657–Arg739, and Pro742–Val836. Thr582 is a glycosylation site (O-linked (Man) threonine). N-linked (GlcNAc...) asparagine glycans are attached at residues Asn607 and Asn635. O-linked (Man) threonine glycans are attached at residues Thr676 and Thr761. Residues Asn785, Asn879, and Asn930 are each glycosylated (N-linked (GlcNAc...) asparagine). The helical transmembrane segment at Gly933–Leu955 threads the bilayer. The Cytoplasmic portion of the chain corresponds to Lys956–Thr1381. Ser966 carries the post-translational modification Phosphoserine. Thr977 carries the post-translational modification Phosphothreonine. Phosphoserine occurs at positions 990, 997, and 1000. Phosphotyrosine is present on Tyr1003. The region spanning Val1078–Ile1345 is the Protein kinase domain. ATP contacts are provided by residues Ile1084–Val1092 and Lys1110. The Proton acceptor role is filled by Asp1204. An interaction with RANBP9 region spans residues Leu1212–Thr1381. Tyr1230 bears the Phosphotyrosine mark. Residues Tyr1234 and Tyr1235 each carry the phosphotyrosine; by autocatalysis modification. Thr1289 bears the Phosphothreonine mark. The segment at Trp1320–Val1359 is interaction with MUC20. Tyr1349 and Tyr1356 each carry phosphotyrosine; by autocatalysis. Position 1365 is a phosphotyrosine (Tyr1365).

Belongs to the protein kinase superfamily. Tyr protein kinase family. In terms of assembly, heterodimer made of an alpha chain (50 kDa) and a beta chain (145 kDa) which are disulfide linked. Binds PLXNB1. Interacts when phosphorylated with downstream effectors including STAT3, PIK3R1, SRC, PCLG1, GRB2 and GAB1. Interacts with SPSB1, SPSB2 and SPSB4. Interacts with INPP5D/SHIP1. When phosphorylated at Tyr-1356, interacts with INPPL1/SHIP2. Interacts with RANBP9 and RANBP10, as well as SPSB1, SPSB2, SPSB3 and SPSB4. SPSB1 binding occurs in the presence and in the absence of HGF, however HGF treatment has a positive effect on this interaction. Interacts with MUC20; prevents interaction with GRB2 and suppresses hepatocyte growth factor-induced cell proliferation. Interacts with GRB10. Interacts with PTPN1 and PTPN2. Interacts with HSP90AA1 and HSP90AB1; the interaction suppresses MET kinase activity. Interacts with tensin TNS3. Interacts (when phosphorylated) with tensin TNS4 (via SH2 domain); the interaction increases MET protein stability by inhibiting MET endocytosis and subsequent lysosomal degradation. In terms of processing, autophosphorylated in response to ligand binding on Tyr-1234 and Tyr-1235 in the kinase domain leading to further phosphorylation of Tyr-1349 and Tyr-1356 in the C-terminal multifunctional docking site. Dephosphorylated by PTPRJ at Tyr-1349 and Tyr-1365. Dephosphorylated by PTPN1 and PTPN2. Post-translationally, ubiquitinated. Ubiquitination by CBL regulates the receptor stability and activity through proteasomal degradation. O-mannosylation of IPT/TIG domains by TMEM260 is required for protein maturation. O-mannosylated residues are composed of single mannose glycans that are not elongated or modified.

It is found in the membrane. The enzyme catalyses L-tyrosyl-[protein] + ATP = O-phospho-L-tyrosyl-[protein] + ADP + H(+). Its activity is regulated as follows. In its inactive state, the C-terminal tail interacts with the catalytic domain and inhibits the kinase activity. Upon ligand binding, the C-terminal tail is displaced and becomes phosphorylated, thus increasing the kinase activity. Its function is as follows. Receptor tyrosine kinase that transduces signals from the extracellular matrix into the cytoplasm by binding to hepatocyte growth factor/HGF ligand. Regulates many physiological processes including proliferation, scattering, morphogenesis and survival. Ligand binding at the cell surface induces autophosphorylation of MET on its intracellular domain that provides docking sites for downstream signaling molecules. Following activation by ligand, interacts with the PI3-kinase subunit PIK3R1, PLCG1, SRC, GRB2, STAT3 or the adapter GAB1. Recruitment of these downstream effectors by MET leads to the activation of several signaling cascades including the RAS-ERK, PI3 kinase-AKT, or PLCgamma-PKC. The RAS-ERK activation is associated with the morphogenetic effects while PI3K/AKT coordinates prosurvival effects. During embryonic development, MET signaling plays a role in gastrulation, development and migration of muscles and neuronal precursors, angiogenesis and kidney formation. In adults, participates in wound healing as well as organ regeneration and tissue remodeling. Also promotes differentiation and proliferation of hematopoietic cells. In Papio anubis (Olive baboon), this protein is Hepatocyte growth factor receptor (MET).